Consider the following 860-residue polypeptide: Glucans biosynthesis glucosyltransferase H (860 aa).

6 helical membrane-spanning segments follow: residues 141–161 (FILL…MKGI), 187–207 (VLPY…FCWV), 515–535 (VFLT…FLVL), 572–592 (LFST…MLIW), 599–619 (FGGV…SVLL), and 682–702 (FLWW…VSVI).

Belongs to the glycosyltransferase 2 family. OpgH subfamily.

It localises to the cell inner membrane. The protein operates within glycan metabolism; osmoregulated periplasmic glucan (OPG) biosynthesis. Its function is as follows. Involved in the biosynthesis of osmoregulated periplasmic glucans (OPGs). The sequence is that of Glucans biosynthesis glucosyltransferase H from Pseudomonas paraeruginosa (strain DSM 24068 / PA7) (Pseudomonas aeruginosa (strain PA7)).